The chain runs to 548 residues: MKTKFIFITGGVLSSLGKGLAAASVGALLQARGLKVTIQKLDPYINVDPGTMNPFQHGEVYVTDDGAETDLDLGHYERYLGIPMNQRNNYTSGSIYHRVITKERRGDYLGGTVQVIPHITDEIKSVIMNLASDDLDVALVEIGGTVGDIEGQPFLEAIRQLRSDLGRDRCMYIHLTLVPYLAAAGEHKTKPTQHSVKELRSIGIQPDIILCRCEKAVTDDLKHKIALFCNVEKDAVFSAVDVKNIYEVPLSFYEEGFDQKIAIMLQLPAKNPDLSKWQELVDTCANPQGKVTIGIVGKYVDLKEAYKSLHEALIHGGVANKLAVELKYVNSELITDENVAESLAGLDGILVPGGFGSRGVEGKIRAIRYARENKVPFFGICLGMQCAVIEFARNVAGLPAANSEEFDEQTPDKVIYLMTEWFDFRSKQVERRDSGSEKGGTMRLGSYPCAVVKGTNAFTAYQAEKVDERHRHRFEFNNAYLDKLKEAGLVFSGLSPDGELVEMVEIKDHPWFLGCQFHPEFKSYPMTPHPLFREFIKAAGKQAVKSKR.

The interval 1 to 267 (MKTKFIFITG…DQKIAIMLQL (267 aa)) is amidoligase domain. Serine 14 is a binding site for CTP. Serine 14 lines the UTP pocket. ATP contacts are provided by residues 15 to 20 (SLGKGL) and aspartate 72. Mg(2+) contacts are provided by aspartate 72 and glutamate 141. CTP is bound by residues 148-150 (DIE), 188-193 (KTKPTQ), and lysine 224. UTP contacts are provided by residues 188 to 193 (KTKPTQ) and lysine 224. Residues 292 to 545 (TIGIVGKYVD…IKAAGKQAVK (254 aa)) form the Glutamine amidotransferase type-1 domain. Glycine 354 serves as a coordination point for L-glutamine. The active-site Nucleophile; for glutamine hydrolysis is cysteine 381. L-glutamine contacts are provided by residues 382 to 385 (LGMQ), glutamate 405, and arginine 473. Catalysis depends on residues histidine 518 and glutamate 520.

The protein belongs to the CTP synthase family. As to quaternary structure, homotetramer.

The enzyme catalyses UTP + L-glutamine + ATP + H2O = CTP + L-glutamate + ADP + phosphate + 2 H(+). It carries out the reaction L-glutamine + H2O = L-glutamate + NH4(+). The catalysed reaction is UTP + NH4(+) + ATP = CTP + ADP + phosphate + 2 H(+). Its pathway is pyrimidine metabolism; CTP biosynthesis via de novo pathway; CTP from UDP: step 2/2. With respect to regulation, allosterically activated by GTP, when glutamine is the substrate; GTP has no effect on the reaction when ammonia is the substrate. The allosteric effector GTP functions by stabilizing the protein conformation that binds the tetrahedral intermediate(s) formed during glutamine hydrolysis. Inhibited by the product CTP, via allosteric rather than competitive inhibition. In terms of biological role, catalyzes the ATP-dependent amination of UTP to CTP with either L-glutamine or ammonia as the source of nitrogen. Regulates intracellular CTP levels through interactions with the four ribonucleotide triphosphates. The polypeptide is CTP synthase (Oleidesulfovibrio alaskensis (strain ATCC BAA-1058 / DSM 17464 / G20) (Desulfovibrio alaskensis)).